The primary structure comprises 507 residues: Myocyte-specific enhancer factor 2A (507 aa).

An MADS-box domain is found at 3-57; the sequence is RKKIQITRIMDERNRQVTFTKRKFGLMKKAYELSVLCDCEIALIIFNSSNKLFQY. Positions 58-86 form a DNA-binding region, mef2-type; that stretch reads ASTDMDKVLLKYTEYNEPHESGTNSDIVE. Residue Ser-59 is modified to Phosphoserine; by CK2. A phosphoserine mark is found at Ser-98 and Ser-235. The tract at residues 175-269 is disordered; that stretch reads ADSSMLSPPQ…GGGNLGMNSR (95 aa). A compositionally biased stretch (polar residues) spans 209-245; that stretch reads LSTSDLTVPNGAGSSPVGNGFVNSRASPNLVGTTGAN. Position 249 is an N6-acetyllysine (Lys-249). Ser-255 is modified (phosphoserine). The required for interaction with MAPKs stretch occupies residues 266 to 283; that stretch reads MNSRKPDLRVVIPPSSKG. The beta domain stretch occupies residues 289–296; the sequence is SEEEELEL. 2 positions are modified to phosphothreonine; by MAPK7 and MAPK14: Thr-312 and Thr-319. Position 355 is a phosphoserine; by MAPK7 (Ser-355). A compositionally biased stretch (polar residues) spans 390–402; the sequence is SNLSINTNQNINI. Positions 390-507 are disordered; sequence SNLSINTNQN…KRMRMDAWVT (118 aa). Lys-403 carries the N6-acetyllysine; alternate modification. A Glycyl lysine isopeptide (Lys-Gly) (interchain with G-Cter in SUMO); alternate cross-link involves residue Lys-403. Ser-408 carries the post-translational modification Phosphoserine; by CDK5. Thr-415 is modified (phosphothreonine). A compositionally biased stretch (pro residues) spans 423-443; sequence QPPPPSQAPQPQPPQPQPQPQ. Ser-453 carries the phosphoserine modification. Residues 453–466 show a composition bias toward low complexity; sequence SPVDSLSSSSSSYD. Composition is skewed to basic and acidic residues over residues 467 to 477 and 488 to 507; these read GSDREDPRGDF and NTEDRESPSVKRMRMDAWVT.

The protein belongs to the MEF2 family. As to quaternary structure, binds DNA as a homo- or heterodimer. Dimerizes with MEF2D. Interacts with HDAC7. Interacts with PIAS1; the interaction enhances sumoylation. Interacts with HDAC4, HDAC9 and SLC2A4RG. Interacts (via the N-terminal) with MAPK7; the interaction results in the phosphorylation and transcriptional activity of MEF2A. Constitutive phosphorylation on Ser-408 promotes Lys-403 sumoylation thus preventing acetylation at this site. Dephosphorylation on Ser-408 by PPP3CA upon neuron depolarization promotes a switch from sumoylation to acetylation on residue Lys-403 leading to inhibition of dendrite claw differentiation. Phosphorylation on Thr-312 and Thr-319 are the main sites involved in p38 MAPK signaling and activate transcription. Phosphorylated on these sites by MAPK14/p38alpha and MAPK11/p38beta, but not by MAPK13/p38delta nor by MAPK12/p38gamma. Phosphorylation on Ser-408 by CDK5 induced by neurotoxicity inhibits MEF2A transcriptional activation leading to apoptosis of cortical neurons. Phosphorylation on Thr-312, Thr-319 and Ser-355 can be induced by EGF. In terms of processing, sumoylation on Lys-403 is enhanced by PIAS1 and represses transcriptional activity. Phosphorylation on Ser-408 is required for sumoylation. Has no effect on nuclear location nor on DNA binding. Sumoylated with SUMO1 and, to a lesser extent with SUMO2 and SUMO3. PIASx facilitates sumoylation in postsynaptic dendrites in the cerebellar cortex and promotes their morphogenesis. Post-translationally, acetylation on Lys-403 activates transcriptional activity. Acetylated by p300 on several sites in diffentiating myocytes. Acetylation on Lys-4 increases DNA binding and transactivation. Hyperacetylation by p300 leads to enhanced cardiac myocyte growth and heart failure. Proteolytically cleaved on several sites by caspase 3 and caspase 7 following neurotoxicity. Preferentially cleaves the CDK5-mediated hyperphosphorylated form which leads to cortical neuron apoptosis and transcriptional inactivation.

The protein resides in the nucleus. Its function is as follows. Transcriptional activator which binds specifically to the MEF2 element, 5'-YTA[AT](4)TAR-3', found in numerous muscle-specific genes. Also involved in the activation of numerous growth factor- and stress-induced genes. Mediates cellular functions not only in skeletal and cardiac muscle development, but also in neuronal differentiation and survival. Plays diverse roles in the control of cell growth, survival and apoptosis via p38 MAPK signaling in muscle-specific and/or growth factor-related transcription. In cerebellar granule neurons, phosphorylated and sumoylated MEF2A represses transcription of NUR77 promoting synaptic differentiation. Associates with chromatin to the ZNF16 promoter. The chain is Myocyte-specific enhancer factor 2A (MEF2A) from Sus scrofa (Pig).